The primary structure comprises 148 residues: Large ribosomal subunit protein bL9 (148 aa).

The protein belongs to the bacterial ribosomal protein bL9 family.

Its function is as follows. Binds to the 23S rRNA. In Pseudomonas fluorescens (strain ATCC BAA-477 / NRRL B-23932 / Pf-5), this protein is Large ribosomal subunit protein bL9.